Reading from the N-terminus, the 37-residue chain is Large ribosomal subunit protein bL36 (37 aa).

Belongs to the bacterial ribosomal protein bL36 family.

The polypeptide is Large ribosomal subunit protein bL36 (Nitratidesulfovibrio vulgaris (strain ATCC 29579 / DSM 644 / CCUG 34227 / NCIMB 8303 / VKM B-1760 / Hildenborough) (Desulfovibrio vulgaris)).